A 472-amino-acid chain; its full sequence is Adenosylhomocysteinase (472 aa).

3 residues coordinate substrate: Thr64, Asp138, and Glu198. Position 199–201 (199–201 (TTT)) interacts with NAD(+). Residues Lys228 and Asp232 each contribute to the substrate site. NAD(+)-binding positions include Asn233, 262 to 267 (GFGDVG), Glu285, Asn320, 341 to 343 (IGH), and Asn386.

It belongs to the adenosylhomocysteinase family. NAD(+) serves as cofactor.

The protein localises to the cytoplasm. It catalyses the reaction S-adenosyl-L-homocysteine + H2O = L-homocysteine + adenosine. The protein operates within amino-acid biosynthesis; L-homocysteine biosynthesis; L-homocysteine from S-adenosyl-L-homocysteine: step 1/1. In terms of biological role, may play a key role in the regulation of the intracellular concentration of adenosylhomocysteine. This Prochlorococcus marinus (strain MIT 9301) protein is Adenosylhomocysteinase.